The chain runs to 301 residues: 2-dehydropantoate 2-reductase (301 aa).

NADP(+) is bound by residues 11 to 16 (GAGAMG), asparagine 107, and alanine 133. Substrate is bound at residue asparagine 107. The active-site Proton donor is lysine 187. Substrate-binding residues include asparagine 191, asparagine 195, asparagine 205, and serine 251. An NADP(+)-binding site is contributed by glutamate 263.

This sequence belongs to the ketopantoate reductase family.

The protein resides in the cytoplasm. It carries out the reaction (R)-pantoate + NADP(+) = 2-dehydropantoate + NADPH + H(+). The protein operates within cofactor biosynthesis; (R)-pantothenate biosynthesis; (R)-pantoate from 3-methyl-2-oxobutanoate: step 2/2. In terms of biological role, catalyzes the NADPH-dependent reduction of ketopantoate into pantoic acid. The sequence is that of 2-dehydropantoate 2-reductase from Listeria innocua serovar 6a (strain ATCC BAA-680 / CLIP 11262).